The primary structure comprises 150 residues: Photosystem II extrinsic protein V (150 aa).

An N-terminal signal peptide occupies residues M1–A20. 4 residues coordinate heme c: C50, C53, H54, and H105.

The protein belongs to the cytochrome c family. PsbV subfamily. PSII is composed of 1 copy each of membrane proteins PsbA, PsbB, PsbC, PsbD, PsbE, PsbF, PsbH, PsbI, PsbJ, PsbK, PsbL, PsbM, PsbT, PsbY, PsbZ, Psb30/Ycf12, at least 3 peripheral proteins of the oxygen-evolving complex and a large number of cofactors. It forms dimeric complexes. The extrinsic subunits in red algae are PsbO (OEC33), PsbQ', cytochrome c-550 and PsbU. The cofactor is heme c.

Its subcellular location is the plastid. The protein localises to the chloroplast thylakoid membrane. One of the extrinsic, lumenal subunits of photosystem II (PSII). PSII is a light-driven water plastoquinone oxidoreductase, using light energy to abstract electrons from H(2)O, generating a proton gradient subsequently used for ATP formation. The extrinsic proteins stabilize the structure of photosystem II oxygen-evolving complex (OEC), the ion environment of oxygen evolution and protect the OEC against heat-induced inactivation. The chain is Photosystem II extrinsic protein V from Cyanidioschyzon merolae (strain NIES-3377 / 10D) (Unicellular red alga).